We begin with the raw amino-acid sequence, 483 residues long: Regulator of nonsense transcripts 3B (483 aa).

Composition is skewed to basic and acidic residues over residues 1–14 and 34–50; these read MKEEKEHRPKEKRV and SKGEDKQDRNKEKKEAL. The disordered stretch occupies residues 1 to 51; that stretch reads MKEEKEHRPKEKRVTLLTPAGATGSGGGTSGDSSKGEDKQDRNKEKKEALS. Residues 30–255 form a necessary for interaction with UPF2 region; sequence SGDSSKGEDK…DIEKLKKIDR (226 aa). Residues 52 to 57 form a binds to UPF2 region; it reads KVVIRR. Threonine 169 and threonine 198 each carry phosphothreonine. Residues 206-483 are disordered; the sequence is NKQRMREEKR…ISHRKEGGEE (278 aa). Basic and acidic residues-rich tracts occupy residues 209-268, 285-314, 323-409, and 417-437; these read RMRE…EPKI, KKPEKGDEKELDKREKAKKLDKENLSDERA, KRSD…KAES, and EKTEKKEEVVKRDRIRNKDRP. Serine 310 is subject to Phosphoserine. The interval 424–483 is sufficient for association with EJC core; that stretch reads EVVKRDRIRNKDRPAMQLYQPGARSRNRLCPPDDSTKSGDSAAERKQESGISHRKEGGEE. Positions 430-447 are necessary for interaction with RBM8A and for activating NMD; the sequence is RIRNKDRPAMQLYQPGAR. Arginine 447 carries the post-translational modification Omega-N-methylarginine. Residues 457-483 are compositionally biased toward basic and acidic residues; the sequence is DSTKSGDSAAERKQESGISHRKEGGEE.

Belongs to the RENT3 family. In terms of assembly, found in a post-splicing messenger ribonucleoprotein (mRNP) complex. Core component of the mRNA splicing-dependent exon junction complex (EJC); the core complex contains CASC3, EIF4A3, MAGOH or MAGOHB, and RBM8A. The EJC core components EIF4A3 and the MAGOH-RBM8A dimer form a composite binding site for UPF3B which overlaps with the EJC binding site for WIBG. Interacts with EST1A, UPF2 and RBM8A. Interacts with CPSF6. Interacts with DHX34; the interaction is RNA-independent. In terms of tissue distribution, expressed in testis, uterus, prostate, heart, muscle, brain, spinal cord and placenta.

The protein resides in the nucleus. It localises to the cytoplasm. In terms of biological role, involved in nonsense-mediated decay (NMD) of mRNAs containing premature stop codons by associating with the nuclear exon junction complex (EJC) and serving as link between the EJC core and NMD machinery. Recruits UPF2 at the cytoplasmic side of the nuclear envelope and the subsequent formation of an UPF1-UPF2-UPF3 surveillance complex (including UPF1 bound to release factors at the stalled ribosome) is believed to activate NMD. In cooperation with UPF2 stimulates both ATPase and RNA helicase activities of UPF1. Binds spliced mRNA upstream of exon-exon junctions. In vitro, stimulates translation; the function is independent of association with UPF2 and components of the EJC core. This Homo sapiens (Human) protein is Regulator of nonsense transcripts 3B.